We begin with the raw amino-acid sequence, 242 residues long: Probable transcriptional regulatory protein mhp472 (242 aa).

This sequence belongs to the TACO1 family.

Its subcellular location is the cytoplasm. In Mesomycoplasma hyopneumoniae (strain 232) (Mycoplasma hyopneumoniae), this protein is Probable transcriptional regulatory protein mhp472.